The chain runs to 87 residues: U3-theraphotoxin-Hhn1l (87 aa).

A signal peptide spans 1-24 (MVNMKASMFLTFAGLVLLFVVCYA). A propeptide spanning residues 25-52 (SESEEKEFPKEMLSSIFAVDNDFKQEER) is cleaved from the precursor. Cystine bridges form between cysteine 54–cysteine 67, cysteine 61–cysteine 72, and cysteine 66–cysteine 79.

This sequence belongs to the neurotoxin 10 (Hwtx-1) family. 51 (Hntx-8) subfamily. Hntx-8 sub-subfamily. In terms of tissue distribution, expressed by the venom gland.

The protein resides in the secreted. Functionally, ion channel inhibitor. This is U3-theraphotoxin-Hhn1l from Cyriopagopus hainanus (Chinese bird spider).